A 195-amino-acid chain; its full sequence is Imidazoleglycerol-phosphate dehydratase (195 aa).

Belongs to the imidazoleglycerol-phosphate dehydratase family.

The protein localises to the cytoplasm. It catalyses the reaction D-erythro-1-(imidazol-4-yl)glycerol 3-phosphate = 3-(imidazol-4-yl)-2-oxopropyl phosphate + H2O. It functions in the pathway amino-acid biosynthesis; L-histidine biosynthesis; L-histidine from 5-phospho-alpha-D-ribose 1-diphosphate: step 6/9. The chain is Imidazoleglycerol-phosphate dehydratase from Burkholderia vietnamiensis (strain G4 / LMG 22486) (Burkholderia cepacia (strain R1808)).